The chain runs to 285 residues: Phosphatidylglycerol--prolipoprotein diacylglyceryl transferase (285 aa).

The next 5 helical transmembrane spans lie at 17–37, 43–63, 78–98, 113–133, and 139–159; these read ALGL…GLTL, WYAL…LFLL, LVFW…VLFY, WEGG…IWWV, and LSWL…LFLG. Arg160 provides a ligand contact to a 1,2-diacyl-sn-glycero-3-phospho-(1'-sn-glycerol). Helical transmembrane passes span 195–215, 223–243, and 256–276; these read LYEA…QFFA, GKLA…VEWF, and GLTM…WLII.

This sequence belongs to the Lgt family.

It localises to the cell inner membrane. The catalysed reaction is L-cysteinyl-[prolipoprotein] + a 1,2-diacyl-sn-glycero-3-phospho-(1'-sn-glycerol) = an S-1,2-diacyl-sn-glyceryl-L-cysteinyl-[prolipoprotein] + sn-glycerol 1-phosphate + H(+). It functions in the pathway protein modification; lipoprotein biosynthesis (diacylglyceryl transfer). Catalyzes the transfer of the diacylglyceryl group from phosphatidylglycerol to the sulfhydryl group of the N-terminal cysteine of a prolipoprotein, the first step in the formation of mature lipoproteins. This chain is Phosphatidylglycerol--prolipoprotein diacylglyceryl transferase, found in Zymomonas mobilis subsp. mobilis (strain ATCC 31821 / ZM4 / CP4).